A 342-amino-acid chain; its full sequence is RNA 3'-terminal phosphate cyclase (342 aa).

ATP-binding positions include Gln100 and 283–287 (FLGDQ). His307 functions as the Tele-AMP-histidine intermediate in the catalytic mechanism.

Belongs to the RNA 3'-terminal cyclase family. Type 1 subfamily.

Its subcellular location is the cytoplasm. The enzyme catalyses a 3'-end 3'-phospho-ribonucleotide-RNA + ATP = a 3'-end 2',3'-cyclophospho-ribonucleotide-RNA + AMP + diphosphate. In terms of biological role, catalyzes the conversion of 3'-phosphate to a 2',3'-cyclic phosphodiester at the end of RNA. The mechanism of action of the enzyme occurs in 3 steps: (A) adenylation of the enzyme by ATP; (B) transfer of adenylate to an RNA-N3'P to produce RNA-N3'PP5'A; (C) and attack of the adjacent 2'-hydroxyl on the 3'-phosphorus in the diester linkage to produce the cyclic end product. The biological role of this enzyme is unknown but it is likely to function in some aspects of cellular RNA processing. The chain is RNA 3'-terminal phosphate cyclase (rtcA) from Pyrococcus abyssi (strain GE5 / Orsay).